The following is a 406-amino-acid chain: Bifunctional enzyme IspD/IspF (406 aa).

Residues 1-247 (MSLIRVNGEA…AFFFNPAKDT (247 aa)) form a 2-C-methyl-D-erythritol 4-phosphate cytidylyltransferase region. The 2-C-methyl-D-erythritol 2,4-cyclodiphosphate synthase stretch occupies residues 248 to 406 (FIGMGFDTHA…HVSMRYKQKL (159 aa)). 2 residues coordinate a divalent metal cation: Asp254 and His256. 4-CDP-2-C-methyl-D-erythritol 2-phosphate-binding positions include 254–256 (DTH) and 280–281 (HS). His288 serves as a coordination point for a divalent metal cation. Residues 302–304 (DIG), 307–311 (FPDND), 378–381 (TTME), Phe385, and Lys388 each bind 4-CDP-2-C-methyl-D-erythritol 2-phosphate.

The protein in the N-terminal section; belongs to the IspD/TarI cytidylyltransferase family. IspD subfamily. It in the C-terminal section; belongs to the IspF family. A divalent metal cation serves as cofactor.

The catalysed reaction is 2-C-methyl-D-erythritol 4-phosphate + CTP + H(+) = 4-CDP-2-C-methyl-D-erythritol + diphosphate. It catalyses the reaction 4-CDP-2-C-methyl-D-erythritol 2-phosphate = 2-C-methyl-D-erythritol 2,4-cyclic diphosphate + CMP. It functions in the pathway isoprenoid biosynthesis; isopentenyl diphosphate biosynthesis via DXP pathway; isopentenyl diphosphate from 1-deoxy-D-xylulose 5-phosphate: step 2/6. It participates in isoprenoid biosynthesis; isopentenyl diphosphate biosynthesis via DXP pathway; isopentenyl diphosphate from 1-deoxy-D-xylulose 5-phosphate: step 4/6. In terms of biological role, bifunctional enzyme that catalyzes the formation of 4-diphosphocytidyl-2-C-methyl-D-erythritol from CTP and 2-C-methyl-D-erythritol 4-phosphate (MEP) (IspD), and catalyzes the conversion of 4-diphosphocytidyl-2-C-methyl-D-erythritol 2-phosphate (CDP-ME2P) to 2-C-methyl-D-erythritol 2,4-cyclodiphosphate (ME-CPP) with a corresponding release of cytidine 5-monophosphate (CMP) (IspF). This chain is Bifunctional enzyme IspD/IspF, found in Helicobacter pylori (strain HPAG1).